The primary structure comprises 192 residues: MRLLCGLWLWLSLLKVLQAQTPTPLPLPPPMQSFQGNQFQGEWFVLGLAGNSFRPEHRALLNAFTATFELSDDGRFEVWNAMTRGQHCDTWSYVLIPAAQPGQFTVDHGVEPGADREETRVVDSDYTQFALMLSRRHTSRLAVLRISLLGRSWLLPPGTLDQFICLGRAQGLSDDNIVFPDVTGWSPQASVC.

Residues 1 to 19 form the signal peptide; the sequence is MRLLCGLWLWLSLLKVLQA. An intrachain disulfide couples Cys-88 to Cys-192.

The protein belongs to the calycin superfamily. Lipocalin family. As to quaternary structure, monomer.

It is found in the secreted. In terms of biological role, binds all-trans retinoic acid and may act as a retinoid carrier protein within the epididymis. May play a role in male fertility. The protein is Epididymal-specific lipocalin-12 (LCN12) of Homo sapiens (Human).